Consider the following 972-residue polypeptide: FHF complex subunit HOOK-interacting protein 1B (972 aa).

4 disordered regions span residues 465-496, 510-547, 573-642, and 710-733; these read APSP…VPRP, SLSG…AGEL, SAPY…PGSW, and SFTC…NQLP. Position 467 is a phosphoserine (serine 467). Residues 479-490 show a composition bias toward low complexity; that stretch reads GPGSPSVDSSSV. Serine 510, serine 523, serine 529, and serine 533 each carry phosphoserine. A compositionally biased stretch (low complexity) spans 523-535; the sequence is SPGLSASPASSPG. The segment covering 618–627 has biased composition (gly residues); that stretch reads GLAGGAGEGP. A phosphoserine mark is found at serine 859 and serine 897.

Belongs to the FHIP family. As to quaternary structure, component of the FTS/Hook/FHIP complex (FHF complex), composed of AKTIP/FTS, FHIP1B, and one or more members of the Hook family of proteins HOOK1, HOOK2, and HOOK3. The FHF complex associates with the homotypic vesicular sorting complex (the HOPS complex).

Component of the FTS/Hook/FHIP complex (FHF complex). The FHF complex may function to promote vesicle trafficking and/or fusion via the homotypic vesicular protein sorting complex (the HOPS complex). FHF complex promotes the distribution of AP-4 complex to the perinuclear area of the cell. The polypeptide is FHF complex subunit HOOK-interacting protein 1B (FHIP1B) (Pongo abelii (Sumatran orangutan)).